We begin with the raw amino-acid sequence, 43 residues long: Protein PsbN (43 aa).

A helical membrane pass occupies residues 4-24 (ATIIVIFVSSLLLGITAYSIY).

This sequence belongs to the PsbN family.

It localises to the plastid. The protein resides in the chloroplast thylakoid membrane. May play a role in photosystem I and II biogenesis. This Trieres chinensis (Marine centric diatom) protein is Protein PsbN.